The following is a 319-amino-acid chain: Ribonuclease Z (319 aa).

Residues His-62, His-64, Asp-66, His-67, His-145, Asp-215, and His-273 each coordinate Zn(2+). Asp-66 functions as the Proton acceptor in the catalytic mechanism.

Belongs to the RNase Z family. As to quaternary structure, homodimer. Requires Zn(2+) as cofactor.

The enzyme catalyses Endonucleolytic cleavage of RNA, removing extra 3' nucleotides from tRNA precursor, generating 3' termini of tRNAs. A 3'-hydroxy group is left at the tRNA terminus and a 5'-phosphoryl group is left at the trailer molecule.. Zinc phosphodiesterase, which displays some tRNA 3'-processing endonuclease activity. Probably involved in tRNA maturation, by removing a 3'-trailer from precursor tRNA. This is Ribonuclease Z from Borreliella burgdorferi (strain ATCC 35210 / DSM 4680 / CIP 102532 / B31) (Borrelia burgdorferi).